A 342-amino-acid chain; its full sequence is Succinylglutamate desuccinylase (342 aa).

Residues His-63, Glu-66, and His-155 each contribute to the Zn(2+) site. The active site involves Glu-219.

This sequence belongs to the AspA/AstE family. Succinylglutamate desuccinylase subfamily. The cofactor is Zn(2+).

The enzyme catalyses N-succinyl-L-glutamate + H2O = L-glutamate + succinate. Its pathway is amino-acid degradation; L-arginine degradation via AST pathway; L-glutamate and succinate from L-arginine: step 5/5. Functionally, transforms N(2)-succinylglutamate into succinate and glutamate. This chain is Succinylglutamate desuccinylase, found in Vibrio cholerae serotype O1 (strain ATCC 39315 / El Tor Inaba N16961).